A 138-amino-acid chain; its full sequence is Large ribosomal subunit protein uL16 (138 aa).

The segment covering 1–17 (MLIPRKVKHRKQHHPRQ) has biased composition (basic residues). The tract at residues 1-22 (MLIPRKVKHRKQHHPRQRGIAS) is disordered.

It belongs to the universal ribosomal protein uL16 family. As to quaternary structure, part of the 50S ribosomal subunit.

In terms of biological role, binds 23S rRNA and is also seen to make contacts with the A and possibly P site tRNAs. The chain is Large ribosomal subunit protein uL16 from Mycobacterium avium (strain 104).